Consider the following 157-residue polypeptide: Small ribosomal subunit protein uS7 (157 aa).

This sequence belongs to the universal ribosomal protein uS7 family. Part of the 30S ribosomal subunit. Contacts proteins S9 and S11.

In terms of biological role, one of the primary rRNA binding proteins, it binds directly to 16S rRNA where it nucleates assembly of the head domain of the 30S subunit. Is located at the subunit interface close to the decoding center, probably blocks exit of the E-site tRNA. The chain is Small ribosomal subunit protein uS7 from Marinomonas sp. (strain MWYL1).